The sequence spans 456 residues: Enolase (456 aa).

Q177 contacts (2R)-2-phosphoglycerate. E219 acts as the Proton donor in catalysis. Mg(2+)-binding residues include D256, E310, and D337. The (2R)-2-phosphoglycerate site is built by K362, R391, S392, and K413. K362 acts as the Proton acceptor in catalysis.

This sequence belongs to the enolase family. Homodimer. It depends on Mg(2+) as a cofactor.

Its subcellular location is the cytoplasm. It is found in the secreted. The protein localises to the cell surface. It catalyses the reaction (2R)-2-phosphoglycerate = phosphoenolpyruvate + H2O. The protein operates within carbohydrate degradation; glycolysis; pyruvate from D-glyceraldehyde 3-phosphate: step 4/5. Its function is as follows. Catalyzes the reversible conversion of 2-phosphoglycerate (2-PG) into phosphoenolpyruvate (PEP). It is essential for the degradation of carbohydrates via glycolysis. Functionally, 'Moonlights' as a plasminogen receptor. Binds plasminogen, but no fibronectin binding was observed. Plasminogen binding increases bacterial adherence to host cells; plasmin activity leads to degradation of host extracellular matrix proteins, facilitating bacterial dissemination and disease spread. The chain is Enolase from Mycoplasma pneumoniae (strain ATCC 29342 / M129 / Subtype 1) (Mycoplasmoides pneumoniae).